An 84-amino-acid chain; its full sequence is Small ribosomal subunit protein eS27 (84 aa).

Residues 1 to 16 (MPLAKDLLHPTPEEEK) are compositionally biased toward basic and acidic residues. The interval 1–23 (MPLAKDLLHPTPEEEKRKHKKKR) is disordered. The C4-type zinc finger occupies 37 to 59 (CPGCYKITTVFSHAQTVVLCVGC).

The protein belongs to the eukaryotic ribosomal protein eS27 family. Component of the small ribosomal subunit. Part of the small subunit (SSU) processome, composed of more than 70 proteins and the RNA chaperone small nucleolar RNA (snoRNA) U3. Zn(2+) serves as cofactor.

It is found in the cytoplasm. The protein localises to the nucleus. The protein resides in the nucleolus. Functionally, component of the small ribosomal subunit. The ribosome is a large ribonucleoprotein complex responsible for the synthesis of proteins in the cell. Required for proper rRNA processing and maturation of 18S rRNAs. Part of the small subunit (SSU) processome, first precursor of the small eukaryotic ribosomal subunit. During the assembly of the SSU processome in the nucleolus, many ribosome biogenesis factors, an RNA chaperone and ribosomal proteins associate with the nascent pre-rRNA and work in concert to generate RNA folding, modifications, rearrangements and cleavage as well as targeted degradation of pre-ribosomal RNA by the RNA exosome. This chain is Small ribosomal subunit protein eS27 (rps27), found in Xenopus laevis (African clawed frog).